Reading from the N-terminus, the 379-residue chain is ATP-sensitive inward rectifier potassium channel 10 (379 aa).

The Cytoplasmic portion of the chain corresponds to 1–61; sequence MTSVAKVYYS…LKDLWTTFID (61 aa). Arg36 provides a ligand contact to 1,2-dioctanoyl-sn-glycero-3-phospho-(1D-myo-inositol-4,5-bisphosphate). The chain crosses the membrane as a helical span at residues 62-88; it reads MQWRYKLLLFSATFAGTWFLFGVVWYL. Residues 89–114 lie on the Extracellular side of the membrane; the sequence is VAVAHGDLLELDPPANHTPCVVQVHT. Residues Cys108 and Cys140 are joined by a disulfide bond. Positions 115–131 form an intramembrane region, discontinuously helical; Pore-forming; sequence LTGAFLFSLESQTTIGY. A Selectivity filter motif is present at residues 128 to 133; the sequence is TIGYGF. The Extracellular segment spans residues 132 to 140; it reads GFRYISEEC. A helical membrane pass occupies residues 141–166; sequence PLAIVLLIAQLVLTTILEIFITGTFL. Residues 167–379 are Cytoplasmic-facing; sequence AKIARPKKRA…SALSVRISNV (213 aa). Positions 168, 171, and 173 each coordinate 1,2-dioctanoyl-sn-glycero-3-phospho-(1D-myo-inositol-4,5-bisphosphate). Residue 210–217 coordinates ATP; sequence GCQVTGKL.

This sequence belongs to the inward rectifier-type potassium channel (TC 1.A.2.1) family. KCNJ10 subfamily. In terms of assembly, homotetramer. In kidney cells, it forms heteromeric channels with Kir5.1/KCNJ16; this interaction is required for KCNJ16 localization to the basolateral membrane. Interacts with MAGI1, alone and possibly as a heteromer with KCNJ16; this interaction may facilitate KCNJ10/KCNJ16 potassium channel expression at the basolateral membrane in kidney cells. Interacts with PATJ. Expressed in kidney (at protein level). In the nephron, expressed in the distal convoluted tubule, the connecting tubule, the collecting duct and cortical thick ascending limbs.

The protein localises to the membrane. Its subcellular location is the basolateral cell membrane. It carries out the reaction K(+)(in) = K(+)(out). Its activity is regulated as follows. Channel activity is strongly regulated by variations of cytosolic pH; channels are activated by alkaline and inhibited by acidic pH values. Inhibited by Ba(2+) and Cs(+). Activated by phosphatidylinositol 4,5 biphosphate (PtdIns(4,5)P2). Its function is as follows. May be responsible for potassium buffering action of glial cells in the brain. Inward rectifier potassium channels are characterized by a greater tendency to allow potassium to flow into the cell rather than out of it. Their voltage dependence is regulated by the concentration of extracellular potassium; as external potassium is raised, the voltage range of the channel opening shifts to more positive voltages. The inward rectification is mainly due to the blockage of outward current by internal magnesium. Can be blocked by extracellular barium and cesium. In the kidney, together with KCNJ16, mediates basolateral K(+) recycling in distal tubules; this process is critical for Na(+) reabsorption at the tubules. This is ATP-sensitive inward rectifier potassium channel 10 from Homo sapiens (Human).